The chain runs to 167 residues: 2-C-methyl-D-erythritol 2,4-cyclodiphosphate synthase (167 aa).

2 residues coordinate a divalent metal cation: Asp9 and His11. Residues 9-11 (DVH) and 35-36 (HS) each bind 4-CDP-2-C-methyl-D-erythritol 2-phosphate. Residue His43 participates in a divalent metal cation binding. 4-CDP-2-C-methyl-D-erythritol 2-phosphate is bound by residues 57 to 59 (DIG), 62 to 66 (FPDTD), 133 to 136 (TTTE), Phe140, and Arg143.

This sequence belongs to the IspF family. Homotrimer. A divalent metal cation serves as cofactor.

The enzyme catalyses 4-CDP-2-C-methyl-D-erythritol 2-phosphate = 2-C-methyl-D-erythritol 2,4-cyclic diphosphate + CMP. It functions in the pathway isoprenoid biosynthesis; isopentenyl diphosphate biosynthesis via DXP pathway; isopentenyl diphosphate from 1-deoxy-D-xylulose 5-phosphate: step 4/6. In terms of biological role, involved in the biosynthesis of isopentenyl diphosphate (IPP) and dimethylallyl diphosphate (DMAPP), two major building blocks of isoprenoid compounds. Catalyzes the conversion of 4-diphosphocytidyl-2-C-methyl-D-erythritol 2-phosphate (CDP-ME2P) to 2-C-methyl-D-erythritol 2,4-cyclodiphosphate (ME-CPP) with a corresponding release of cytidine 5-monophosphate (CMP). The sequence is that of 2-C-methyl-D-erythritol 2,4-cyclodiphosphate synthase from Glaesserella parasuis serovar 5 (strain SH0165) (Haemophilus parasuis).